Reading from the N-terminus, the 417-residue chain is Gamma-glutamyl phosphate reductase (417 aa).

The protein belongs to the gamma-glutamyl phosphate reductase family.

It localises to the cytoplasm. The enzyme catalyses L-glutamate 5-semialdehyde + phosphate + NADP(+) = L-glutamyl 5-phosphate + NADPH + H(+). Its pathway is amino-acid biosynthesis; L-proline biosynthesis; L-glutamate 5-semialdehyde from L-glutamate: step 2/2. Catalyzes the NADPH-dependent reduction of L-glutamate 5-phosphate into L-glutamate 5-semialdehyde and phosphate. The product spontaneously undergoes cyclization to form 1-pyrroline-5-carboxylate. This chain is Gamma-glutamyl phosphate reductase, found in Phocaeicola vulgatus (strain ATCC 8482 / DSM 1447 / JCM 5826 / CCUG 4940 / NBRC 14291 / NCTC 11154) (Bacteroides vulgatus).